The sequence spans 366 residues: Zinc finger CCCH domain-containing protein 11 (366 aa).

A disordered region spans residues 43–66 (LHQAVQPKPDPTKTAAKKKKEEEK). Positions 54-79 (TKTAAKKKKEEEKAREKELNDLFKVA) form a coiled coil. 2 C3H1-type zinc fingers span residues 90 to 117 (DPKS…HDLN) and 160 to 198 (KPTD…HALP). Residues 208–234 (KALLEEESEKIAIEDEIEDQRKKVKTT) adopt a coiled-coil conformation. The tract at residues 293 to 338 (YERQEESEANEEPSNKNQDEGPSSSTSNGKEVEESDDEDINIDDDL) is disordered. Positions 312–321 (EGPSSSTSNG) are enriched in polar residues. A compositionally biased stretch (acidic residues) spans 325 to 338 (EESDDEDINIDDDL).

This chain is Zinc finger CCCH domain-containing protein 11, found in Oryza sativa subsp. japonica (Rice).